We begin with the raw amino-acid sequence, 437 residues long: Adenylosuccinate synthetase (437 aa).

GTP contacts are provided by residues 12-18 and 40-42; these read GDEGKGK and GHT. Residue Asp-13 is the Proton acceptor of the active site. The Mg(2+) site is built by Asp-13 and Gly-40. IMP contacts are provided by residues 13–16, 38–41, Thr-128, Arg-142, Gln-223, Thr-238, and Arg-302; these read DEGK and NAGH. Catalysis depends on His-41, which acts as the Proton donor. Residue 298-304 coordinates substrate; sequence TTTGRRR. Residues Arg-304, 330–332, and 412–414 each bind GTP; these read KLD and SLG.

The protein belongs to the adenylosuccinate synthetase family. In terms of assembly, homodimer. Mg(2+) serves as cofactor.

Its subcellular location is the cytoplasm. The enzyme catalyses IMP + L-aspartate + GTP = N(6)-(1,2-dicarboxyethyl)-AMP + GDP + phosphate + 2 H(+). The protein operates within purine metabolism; AMP biosynthesis via de novo pathway; AMP from IMP: step 1/2. Functionally, plays an important role in the de novo pathway of purine nucleotide biosynthesis. Catalyzes the first committed step in the biosynthesis of AMP from IMP. The polypeptide is Adenylosuccinate synthetase (Prochlorococcus marinus (strain MIT 9211)).